The following is a 340-amino-acid chain: Ketol-acid reductoisomerase (NADP(+)) (340 aa).

Residues 1-183 (MAITVYYDKD…GGGRTGIIET (183 aa)) form the KARI N-terminal Rossmann domain. NADP(+) is bound by residues 26 to 29 (FGSQ), Arg49, Ser52, Ser54, and 84 to 87 (DEIQ). The active site involves His109. An NADP(+)-binding site is contributed by Gly135. Residues 184-329 (TFKAETETDL…RNLRAMMPWI (146 aa)) enclose the KARI C-terminal knotted domain. Positions 192, 196, 228, and 232 each coordinate Mg(2+). Residue Ser253 participates in substrate binding.

It belongs to the ketol-acid reductoisomerase family. Requires Mg(2+) as cofactor.

It carries out the reaction (2R)-2,3-dihydroxy-3-methylbutanoate + NADP(+) = (2S)-2-acetolactate + NADPH + H(+). The enzyme catalyses (2R,3R)-2,3-dihydroxy-3-methylpentanoate + NADP(+) = (S)-2-ethyl-2-hydroxy-3-oxobutanoate + NADPH + H(+). Its pathway is amino-acid biosynthesis; L-isoleucine biosynthesis; L-isoleucine from 2-oxobutanoate: step 2/4. The protein operates within amino-acid biosynthesis; L-valine biosynthesis; L-valine from pyruvate: step 2/4. Involved in the biosynthesis of branched-chain amino acids (BCAA). Catalyzes an alkyl-migration followed by a ketol-acid reduction of (S)-2-acetolactate (S2AL) to yield (R)-2,3-dihydroxy-isovalerate. In the isomerase reaction, S2AL is rearranged via a Mg-dependent methyl migration to produce 3-hydroxy-3-methyl-2-ketobutyrate (HMKB). In the reductase reaction, this 2-ketoacid undergoes a metal-dependent reduction by NADPH to yield (R)-2,3-dihydroxy-isovalerate. The chain is Ketol-acid reductoisomerase (NADP(+)) from Campylobacter jejuni subsp. jejuni serotype O:2 (strain ATCC 700819 / NCTC 11168).